The primary structure comprises 409 residues: Multifunctional CCA protein (409 aa).

Residues Gly-8 and Arg-11 each coordinate ATP. CTP-binding residues include Gly-8 and Arg-11. Residues Glu-21 and Asp-23 each coordinate Mg(2+). Residues Arg-91, Arg-137, and Arg-140 each coordinate ATP. CTP contacts are provided by Arg-91, Arg-137, and Arg-140. The HD domain occupies 228 to 329 (TGVHTLMVLT…LKALEGLDAF (102 aa)).

It belongs to the tRNA nucleotidyltransferase/poly(A) polymerase family. Bacterial CCA-adding enzyme type 1 subfamily. As to quaternary structure, monomer. Can also form homodimers and oligomers. Mg(2+) is required as a cofactor. It depends on Ni(2+) as a cofactor.

It catalyses the reaction a tRNA precursor + 2 CTP + ATP = a tRNA with a 3' CCA end + 3 diphosphate. The enzyme catalyses a tRNA with a 3' CCA end + 2 CTP + ATP = a tRNA with a 3' CCACCA end + 3 diphosphate. In terms of biological role, catalyzes the addition and repair of the essential 3'-terminal CCA sequence in tRNAs without using a nucleic acid template. Adds these three nucleotides in the order of C, C, and A to the tRNA nucleotide-73, using CTP and ATP as substrates and producing inorganic pyrophosphate. tRNA 3'-terminal CCA addition is required both for tRNA processing and repair. Also involved in tRNA surveillance by mediating tandem CCA addition to generate a CCACCA at the 3' terminus of unstable tRNAs. While stable tRNAs receive only 3'-terminal CCA, unstable tRNAs are marked with CCACCA and rapidly degraded. The protein is Multifunctional CCA protein of Thioalkalivibrio sulfidiphilus (strain HL-EbGR7).